Consider the following 371-residue polypeptide: MQAEKLAYYPFISEASAHVGDLGISLESLLNSRAYRTARARGIERVKEALEGEIKKPPVSEEAQVLSELLSYPFARMLVACVDDQLFTRRYALAEAKAAYTFLRNETPDFLLEFGEDFGISAEIRDSHFSMHFTDYIRFSNSLKEPSWKLTNRQFRAGKIKITKEEFARLLEEAVRERIEQSFPIPEIPPEVSAFCAPYVAEIKEQFEVQKKKFGATDFGAVEPELFPPCISHALANVQGGVNLAHSMRFAMTSFLLNVGMSVEEILNLFNVSPDFDAEKTLYQIEHIAGATGNEYKPPACDTMRTYGNCIGKDGLCAKISHPLGYYERRIFLKNKEREKEEGKEKGNEEKKEKREEHEKKNEKGNEIKEK.

[4Fe-4S] cluster is bound by residues Cys-230, Cys-301, Cys-310, and Cys-317. The segment at 337-371 (EREKEEGKEKGNEEKKEKREEHEKKNEKGNEIKEK) is disordered.

The protein belongs to the eukaryotic-type primase large subunit family. In terms of assembly, heterodimer of a small subunit (PriS) and a large subunit (PriL). Requires [4Fe-4S] cluster as cofactor.

Functionally, regulatory subunit of DNA primase, an RNA polymerase that catalyzes the synthesis of short RNA molecules used as primers for DNA polymerase during DNA replication. Stabilizes and modulates the activity of the small subunit, increasing the rate of DNA synthesis, and conferring RNA synthesis capability. The DNA polymerase activity may enable DNA primase to also catalyze primer extension after primer synthesis. May also play a role in DNA repair. This Methanosarcina acetivorans (strain ATCC 35395 / DSM 2834 / JCM 12185 / C2A) protein is DNA primase large subunit PriL.